A 357-amino-acid chain; its full sequence is Alanine racemase (357 aa).

Lys33 (proton acceptor; specific for D-alanine) is an active-site residue. Lys33 carries the post-translational modification N6-(pyridoxal phosphate)lysine. Arg129 provides a ligand contact to substrate. Tyr253 (proton acceptor; specific for L-alanine) is an active-site residue. Met301 lines the substrate pocket.

The protein belongs to the alanine racemase family. Pyridoxal 5'-phosphate is required as a cofactor.

The catalysed reaction is L-alanine = D-alanine. It participates in amino-acid biosynthesis; D-alanine biosynthesis; D-alanine from L-alanine: step 1/1. Its function is as follows. Catalyzes the interconversion of L-alanine and D-alanine. May also act on other amino acids. This is Alanine racemase (alr) from Pseudomonas fluorescens (strain ATCC BAA-477 / NRRL B-23932 / Pf-5).